The primary structure comprises 861 residues: Benzylsuccinate synthase alpha subunit (861 aa).

The 673-residue stretch at 40 to 712 (TERTRRLKAR…QAVGLYMEVG (673 aa)) folds into the PFL domain. A disordered region spans residues 718 to 744 (TPDGRFGGEAADDGGISPYSGTDKKGP). The region spanning 731–850 (GGISPYSGTD…IIARNEQNFN (120 aa)) is the Glycine radical domain. Gly825 bears the Glycine radical mark.

It belongs to the glycyl radical enzyme (GRE) family. BSS subfamily. As to quaternary structure, heterohexamer composed of 2 alpha subunits, 2 beta subunits and 2 gamma subunits.

The catalysed reaction is toluene + fumarate = 2-benzylsuccinate. The protein operates within xenobiotic degradation; toluene degradation. With respect to regulation, activated by the benzylsuccinate synthase activating enzyme BssD. Rapidly inactivated by oxygen. In terms of biological role, catalyzes the addition of fumarate to the methyl group of toluene, leading to the formation of benzylsuccinate. The protein is Benzylsuccinate synthase alpha subunit (bssA) of Thauera aromatica.